The primary structure comprises 406 residues: ATP phosphoribosyltransferase regulatory subunit (406 aa).

It belongs to the class-II aminoacyl-tRNA synthetase family. HisZ subfamily. In terms of assembly, heteromultimer composed of HisG and HisZ subunits.

The protein localises to the cytoplasm. The protein operates within amino-acid biosynthesis; L-histidine biosynthesis; L-histidine from 5-phospho-alpha-D-ribose 1-diphosphate: step 1/9. Required for the first step of histidine biosynthesis. May allow the feedback regulation of ATP phosphoribosyltransferase activity by histidine. In Methylococcus capsulatus (strain ATCC 33009 / NCIMB 11132 / Bath), this protein is ATP phosphoribosyltransferase regulatory subunit.